The following is a 622-amino-acid chain: Low affinity potassium transport system protein Kup (622 aa).

12 consecutive transmembrane segments (helical) span residues 9-29, 49-69, 103-123, 137-157, 165-185, 213-233, 247-267, 276-296, 337-357, 363-383, 396-416, and 419-439; these read LPAITLAAIGVVYGDIGTSPL, VFGFLSLIFWLLIFVVSIKYL, VIMGLIGGSFFYGEVVITPAI, PQLDTWIVPLSIIVLTLLFMI, VGKLFAPIMLTWFLILAGLGL, VSFIALGAVVLSITGGEALYA, WFTVVLPSLTLNYFGQGALLL, PFFLLAPDWALIPLLIIAALA, IYIPFVNWMLYVAVVIVIVSF, LAAAYGIAVTGTMVLTSILST, FVALILIAFLCVDIPLFTANL, and LLSGGWLPLSLGTVMFIVMTT.

This sequence belongs to the HAK/KUP transporter (TC 2.A.72) family.

It is found in the cell inner membrane. It catalyses the reaction K(+)(in) + H(+)(in) = K(+)(out) + H(+)(out). Functionally, responsible for the low-affinity transport of potassium into the cell. Likely operates as a K(+):H(+) symporter. The sequence is that of Low affinity potassium transport system protein Kup from Escherichia coli O157:H7 (strain EC4115 / EHEC).